Consider the following 1564-residue polypeptide: Superkiller complex protein 3 (1564 aa).

At S2 the chain carries N-acetylserine. TPR repeat units lie at residues 6-39 (VKTALKSARDAIRNKEYKEALKHCKTVLKQEKNN), 40-73 (YNAWVFIGVAAAELEQPDQAQSAYKKAAELEPDQ), 272-305 (GPGLIGLGIKALQDKKYEDAVRNLTEGLKESPVC), 307-339 (SGWYHLAEAQVKMHRPKEAVLSCSQALKIVDNL), 386-419 (PGLLVLKSLAYRNKGSFDEAAKIMEDLLSSYPDL), 420-453 (AEVHALEALIHFTKKDYLQAEKCFQRALEKDTEV), 455-492 (EYHYQLGLTYWFMGEETRKDKTKALTHFLKAARLDTYM), 493-527 (GKVFCYLGHYYRDVVGDKNRARGCYRKAFELDDTD), 564-597 (KWAWLRRGLYYLKAGQHSQAVADLQAALRADPKD), 598-631 (FNCWESLGEAYLSRGGYTTALKSFTKASELNPES), 633-665 (YSVFKVAAIQQILGKYKEAVAQYQMIIKKKEDY), 679-713 (MAKAALVDYLDGKAVDYIEKALEYFTCALQHRADV), 790-824 (AQHLAETGSNMNDLKELLEKSLHCLKKAVRLDSNN), 826-860 (LYWNALGVVACYSGIGNYALAQHCFIKSIQSEQIN), 861-894 (AVAWTNLGVLYLTNENIEQAHEAFKMAQSLDPSY), 980-1013 (APAFTMLGYLNEHLQLKKEAANAYQRAILLLQTA), 1020-1054 (NVAIRNYGRLLCSTGEYDKAIQAFKSTPLEVLEDI), 1056-1084 (GFALALFMKGLYKESSKAYERALSIVESE), 1326-1359 (KWSLSQAVTGLIDTGRISEAETLCTKNLKSNPDQ), and 1400-1433 (VPAWQWLAHVYQSQGMMRAAEMCYRKSLQLASQR).

It belongs to the SKI3 family. In terms of assembly, component of the SKI complex which consists of SKIC2, SKIC3 and SKIC8. Interacts with PAF1. Widely expressed with the highest levels observed in vascular tissues, lymph node, pituitary, lung and intestine. Not expressed in the liver.

The protein localises to the cytoplasm. It localises to the nucleus. Its function is as follows. Component of the SKI complex, a multiprotein complex that assists the RNA-degrading exosome during the mRNA decay and quality-control pathways. The SKI complex catalyzes mRNA extraction from 80S ribosomal complexes in the 3'-5' direction and channels mRNA to the cytosolic exosome for degradation. SKI-mediated extraction of mRNA from stalled ribosomes allow binding of the Pelota-HBS1L complex and subsequent ribosome disassembly by ABCE1 for ribosome recycling. In the nucleus, the SKI complex associates with transcriptionally active genes in a manner dependent on PAF1 complex (PAF1C). This chain is Superkiller complex protein 3, found in Homo sapiens (Human).